The primary structure comprises 207 residues: MAIERYFIKEGIKEMLIDEYLEKELRRAGYGGLDIKKTPLGTKVVIFVERPGFVIGRGGRKIRELTRILERRFNLENPQIEVEEIKNSYFNAKVQATRLAQALERGVHFRRAAYAAIRAIMSNGARGVEIRISGKLTGERAKSVRFYQGYIAKVGNPAETLVSRGYAQALLKLGVLGVKVSIMPPDARLPDEIEIVEKPIEEEVSEQ.

Positions 17–86 (IDEYLEKELR…NPQIEVEEIK (70 aa)) constitute a KH type-2 domain.

This sequence belongs to the universal ribosomal protein uS3 family. As to quaternary structure, part of the 30S ribosomal subunit.

In terms of biological role, binds the lower part of the 30S subunit head. This chain is Small ribosomal subunit protein uS3, found in Thermococcus sibiricus (strain DSM 12597 / MM 739).